The sequence spans 326 residues: Zinc finger protein 830 (326 aa).

Positions 1 to 11 (MAASRKGKAVK) are enriched in basic residues. A disordered region spans residues 1 to 37 (MAASRKGKAVKAVKQEDLRRLMQETRRDSGRQKRVES). Residues 13–36 (VKQEDLRRLMQETRRDSGRQKRVE) are compositionally biased toward basic and acidic residues. A C2H2-type zinc finger spans residues 50-72 (CALCDAPVKNALLWQTHVLGKQH). Low complexity predominate over residues 83-108 (TAPAHTPAPAHTPAHTPAAASSSSST). Disordered regions lie at residues 83 to 214 (TAPA…PVRD), 237 to 257 (EMRQVNSASDAIVAEDDEEGR), and 276 to 309 (EELRAKQETARSRRRSQRREEEPMQEEEPLEEEE). Residues 180–195 (HSGSVSKAEQQESQEP) are compositionally biased toward polar residues. Residues 224 to 295 (KDQLEREWEE…RSRRRSQRRE (72 aa)) adopt a coiled-coil conformation. The span at 276 to 286 (EELRAKQETAR) shows a compositional bias: basic and acidic residues. The segment covering 298-309 (PMQEEEPLEEEE) has biased composition (acidic residues).

It is found in the nucleus. It localises to the chromosome. The protein resides in the nucleus speckle. Its function is as follows. May act as an important regulator of the cell cycle that participates in the maintenance of genome integrity. The polypeptide is Zinc finger protein 830 (Danio rerio (Zebrafish)).